The chain runs to 400 residues: NADH-quinone oxidoreductase subunit D (400 aa).

This sequence belongs to the complex I 49 kDa subunit family. In terms of assembly, NDH-1 is composed of 14 different subunits. Subunits NuoB, C, D, E, F, and G constitute the peripheral sector of the complex.

The protein resides in the cell inner membrane. It carries out the reaction a quinone + NADH + 5 H(+)(in) = a quinol + NAD(+) + 4 H(+)(out). Functionally, NDH-1 shuttles electrons from NADH, via FMN and iron-sulfur (Fe-S) centers, to quinones in the respiratory chain. The immediate electron acceptor for the enzyme in this species is believed to be a menaquinone. Couples the redox reaction to proton translocation (for every two electrons transferred, four hydrogen ions are translocated across the cytoplasmic membrane), and thus conserves the redox energy in a proton gradient. This chain is NADH-quinone oxidoreductase subunit D, found in Chlorobaculum parvum (strain DSM 263 / NCIMB 8327) (Chlorobium vibrioforme subsp. thiosulfatophilum).